Consider the following 313-residue polypeptide: Formimidoylglutamase (313 aa).

Residues histidine 130, aspartate 155, histidine 157, aspartate 159, aspartate 241, and aspartate 243 each coordinate Mn(2+).

The protein belongs to the arginase family. Mn(2+) is required as a cofactor.

The enzyme catalyses N-formimidoyl-L-glutamate + H2O = formamide + L-glutamate. The protein operates within amino-acid degradation; L-histidine degradation into L-glutamate; L-glutamate from N-formimidoyl-L-glutamate (hydrolase route): step 1/1. In terms of biological role, catalyzes the conversion of N-formimidoyl-L-glutamate to L-glutamate and formamide. The chain is Formimidoylglutamase from Citrobacter koseri (strain ATCC BAA-895 / CDC 4225-83 / SGSC4696).